A 946-amino-acid chain; its full sequence is Zinc finger CCCH-type antiviral protein 1 (946 aa).

Residues 1-254 (MTDPEVFCFI…DRSKSRDRFH (254 aa)) form an N-terminal domain region. The short motif at 69–76 (RARVCRRK) is the Nuclear localization signal element. C3H1-type zinc fingers lie at residues 73–86 (CRRKYCQRPCDSLH), 87–113 (LCKLNLLGRCHYAQSQRNLCKYSHDVL), 150–172 (CKSYKGEGRKQICGQPQPCERLH), and 173–194 (ICEHFTRGNCSYLNCLRSHNLM). Disordered regions lie at residues 221–283 (NKHT…KDPL) and 302–354 (RAQL…AAGF). Residues 224-254 (TRRNPPSMRAPHPHRRGGAHRDRSKSRDRFH) are binding to EXOSC5. Positions 242–257 (AHRDRSKSRDRFHHNS) are enriched in basic and acidic residues. Residue Ser257 is modified to Phosphoserine. Ser262 is subject to Phosphoserine; by GSK3-beta. Phosphoserine occurs at positions 265, 269, and 273. A Phosphothreonine modification is found at Thr277. The Nuclear export signal signature appears at 283–290 (LEDVSADV). A phosphoserine mark is found at Ser324 and Ser350. The Nuclear localization signal motif lies at 412 to 413 (KR). The residue at position 425 (Ser425) is a Phosphoserine. A disordered region spans residues 461–491 (NPAWPGTSTHNGPNGFSQIMDETPNVSKSSP). A compositionally biased stretch (polar residues) spans 466–477 (GTSTHNGPNGFS). Tyr508 carries the post-translational modification Phosphotyrosine. A disordered region spans residues 523-570 (GETTTPVQGSNRLPPSPLSSSTSHRVAASGSPGKSSTHASVSPASEPS). A compositionally biased stretch (polar residues) spans 524 to 533 (ETTTPVQGSN). Residue Ser553 is modified to Phosphoserine. A compositionally biased stretch (polar residues) spans 554–567 (PGKSSTHASVSPAS). 2 positions are modified to phosphoserine: Ser583 and Ser680. Residues 684–771 (FVEKTLNSVF…ASKTQRHVVR (88 aa)) form the WWE domain. The PARP catalytic domain maps to 805–946 (SPQRNASTVS…SLDSSGLQRK (142 aa)).

The protein belongs to the ARTD/PARP family. Homodimer or homooligomer. Homooligomerization is essential for its antiviral activity. Interacts with EXOSC5. Interacts (via N-terminal domain) with DDX17 in an RNA-independent manner. Interacts with EXOSC3, EXOSC7, DCP2 and DCP1A. Interacts with PARN in an RNA-independent manner. Interacts with XRN1 in an RNA-dependent manner. Interacts (via N-terminal domain) with DHX30 (via N-terminus) in an RNA-independent manner. Isoform 2 interacts (via zinc-fingers) with RIGI in an RNA-dependent manner. Post-translationally, phosphorylation at Ser-273 is essential for sequential phosphorylation of Ser-269, Ser-265, Ser-262 and Ser-257 by GSK3-beta. Phosphorylation by GSK3-beta enhances its antiviral activity.

Its subcellular location is the cytoplasm. It localises to the nucleus. Its function is as follows. Antiviral protein which inhibits the replication of viruses by recruiting the cellular RNA degradation machineries to degrade the viral mRNAs. Binds to a ZAP-responsive element (ZRE) present in the target viral mRNA, recruits cellular poly(A)-specific ribonuclease PARN to remove the poly(A) tail, and the 3'-5' exoribonuclease complex exosome to degrade the RNA body from the 3'-end. It also recruits the decapping complex DCP1-DCP2 through RNA helicase p72 (DDX17) to remove the cap structure of the viral mRNA to initiate its degradation from the 5'-end. Its target viruses belong to families which include retroviridae: human immunodeficiency virus type 1 (HIV-1) and moloney and murine leukemia virus (MoMLV), filoviridae: ebola virus (EBOV) and marburg virus (MARV), togaviridae: sindbis virus (SINV) and Ross river virus (RRV). Specifically targets the multiply spliced but not unspliced or singly spliced HIV-1 mRNAs for degradation. Isoform 1 is a more potent viral inhibitor than isoform 2. Isoform 2 acts as a positive regulator of RIG-I signaling resulting in activation of the downstream effector IRF3 leading to the expression of type I IFNs and IFN stimulated genes (ISGs). In Mus musculus (Mouse), this protein is Zinc finger CCCH-type antiviral protein 1 (Zc3hav1).